A 265-amino-acid chain; its full sequence is Hydroxyethylthiazole kinase (265 aa).

A substrate-binding site is contributed by Met50. ATP is bound by residues Arg125 and Thr171. Residue Gly198 coordinates substrate.

Belongs to the Thz kinase family. It depends on Mg(2+) as a cofactor.

It catalyses the reaction 5-(2-hydroxyethyl)-4-methylthiazole + ATP = 4-methyl-5-(2-phosphooxyethyl)-thiazole + ADP + H(+). It participates in cofactor biosynthesis; thiamine diphosphate biosynthesis; 4-methyl-5-(2-phosphoethyl)-thiazole from 5-(2-hydroxyethyl)-4-methylthiazole: step 1/1. Functionally, catalyzes the phosphorylation of the hydroxyl group of 4-methyl-5-beta-hydroxyethylthiazole (THZ). This Salmonella newport (strain SL254) protein is Hydroxyethylthiazole kinase.